The following is a 242-amino-acid chain: MATVSMRDMLKAGVHFGHQTRYWNPKMKPFIFGARNRVHIINLEKTVPMFNEALAELAKVGEKKGKVLFVGTKRAASEAVKEAAIASNQFYVNNRWLGGMLTNYKTVRQSIKRLKELEIQSQDGTFDKLTKKEALMRTREMEKLEKSLGGIKDMGGLPDALFVIDADHEHIAIKEANNLGIPVYAVVDTNSNPDGVDYIIPGNDDAIRAVQLYLNAAASAVTEGRNKDVAVVAEKDGFVEAE.

Belongs to the universal ribosomal protein uS2 family.

This is Small ribosomal subunit protein uS2 from Vibrio parahaemolyticus serotype O3:K6 (strain RIMD 2210633).